A 554-amino-acid polypeptide reads, in one-letter code: Glutamine--tRNA ligase (554 aa).

A 'HIGH' region motif is present at residues 34 to 44; it reads PEPNGYLHIGH. ATP-binding positions include 35–37 and 41–47; these read EPN and HIGHAKS. L-glutamine contacts are provided by Asp67 and Tyr212. ATP contacts are provided by residues Thr231, 261 to 262, and 269 to 271; these read RL and MSK. The short motif at 268–272 is the 'KMSKS' region element; the sequence is VMSKR. Residues 317–324 are interaction with tRNA; that stretch reads TKQDNTIE.

Belongs to the class-I aminoacyl-tRNA synthetase family. In terms of assembly, monomer.

Its subcellular location is the cytoplasm. The catalysed reaction is tRNA(Gln) + L-glutamine + ATP = L-glutaminyl-tRNA(Gln) + AMP + diphosphate. The chain is Glutamine--tRNA ligase from Escherichia coli (strain 55989 / EAEC).